Here is a 365-residue protein sequence, read N- to C-terminus: Histidinol-phosphate aminotransferase 2 (365 aa).

Lys-226 carries the N6-(pyridoxal phosphate)lysine modification.

Belongs to the class-II pyridoxal-phosphate-dependent aminotransferase family. Histidinol-phosphate aminotransferase subfamily. In terms of assembly, homodimer. Pyridoxal 5'-phosphate is required as a cofactor.

It catalyses the reaction L-histidinol phosphate + 2-oxoglutarate = 3-(imidazol-4-yl)-2-oxopropyl phosphate + L-glutamate. It participates in amino-acid biosynthesis; L-histidine biosynthesis; L-histidine from 5-phospho-alpha-D-ribose 1-diphosphate: step 7/9. The sequence is that of Histidinol-phosphate aminotransferase 2 (hisC2) from Pasteurella multocida (strain Pm70).